The primary structure comprises 116 residues: Vesicle-associated membrane protein 2 (116 aa).

The segment at 1-33 (MSATAATAPPAAPAGEGGPPAPPPNLTSNRRLQ) is disordered. Serine 2 carries the N-acetylserine modification. Topologically, residues 2 to 94 (SATAATAPPA…KRKYWWKNLK (93 aa)) are cytoplasmic. The region spanning 31–91 (RLQQTQAQVD…AKLKRKYWWK (61 aa)) is the v-SNARE coiled-coil homology domain. A required for interaction with SEPT8 region spans residues 92 to 116 (NLKMMIILGVICAIILIIIIVYFST). A helical; Anchor for type IV membrane protein membrane pass occupies residues 95–114 (MMIILGVICAIILIIIIVYF). Residues 115–116 (ST) lie on the Vesicular side of the membrane.

The protein belongs to the synaptobrevin family. As to quaternary structure, part of the SNARE core complex containing SNAP25, VAMP2 and STX1A; this complex constitutes the basic catalytic machinery of the complex neurotransmitter release apparatus. Recruited to the SNARE complex following binding of the SNARE complex component STX1A to STXBP1. This complex binds to CPLX1. Interacts with POPDC1 and STX4. Interacts with VAPA and VAPB. Interacts with WDFY2, PRKCZ and PRKCI. Forms a complex with WDFY2 and PRKCZ. Interacts (via N-terminus) with KCNB1 (via N-terminus and C-terminus); stimulates the channel inactivation rate of KCNB1. Interacts with SEPT8; the interaction inhibits interaction of VAMP2 with SYP. Interacts with SYP; the interaction is inhibited by interaction with SEPT8. Interacts with PICALM. Interacts with alpha-synuclein/SNCA. Interacts with STX3. Post-translationally, phosphorylated by PRKCZ in vitro and this phosphorylation is increased in the presence of WDFY2. (Microbial infection) Targeted and hydrolyzed by C.botulinum neurotoxin type B (BoNT/B, botB) which hydrolyzes the 76-Gln-|-Phe-77 bond and probably inhibits neurotransmitter release. In terms of processing, (Microbial infection) Targeted and hydrolyzed by C.botulinum neurotoxin type D (BoNT/D, botD) which probably hydrolyzes the 59-Lys-|-Leu-60 bond and inhibits neurotransmitter release. Note that humans are not known to be infected by C.botulinum type D. Post-translationally, (Microbial infection) Targeted and hydrolyzed by C.botulinum neurotoxin type F (BoNT/F, botF) which hydrolyzes the 58-Gln-|-Lys-59 bond and probably inhibits neurotransmitter release. (Microbial infection) Targeted and hydrolyzed by C.tetani tetanus toxin (tetX) which hydrolyzes the 76-Gln-|-Phe-77 bond and probably inhibits neurotransmitter release. In terms of tissue distribution, nervous system and skeletal muscle.

The protein resides in the cytoplasmic vesicle. Its subcellular location is the secretory vesicle. The protein localises to the synaptic vesicle membrane. It localises to the cell membrane. Involved in the targeting and/or fusion of transport vesicles to their target membrane. Major SNARE protein of synaptic vesicles which mediates fusion of synaptic vesicles to release neurotransmitters. Essential for fast vesicular exocytosis and activity-dependent neurotransmitter release as well as fast endocytosis that mediates rapid reuse of synaptic vesicles. Modulates the gating characteristics of the delayed rectifier voltage-dependent potassium channel KCNB1. This chain is Vesicle-associated membrane protein 2, found in Homo sapiens (Human).